A 475-amino-acid polypeptide reads, in one-letter code: Deoxyguanosinetriphosphate triphosphohydrolase-like protein (475 aa).

The region spanning 118-272 (RLTHTLEVAQ…MDLSDDIAYS (155 aa)) is the HD domain.

This sequence belongs to the dGTPase family. Type 2 subfamily.

In Bifidobacterium longum (strain NCC 2705), this protein is Deoxyguanosinetriphosphate triphosphohydrolase-like protein (dgt).